We begin with the raw amino-acid sequence, 87 residues long: MAVVVRVVYCGAUGYKPKYLQLKKKLEDEFPSRLDICGEGTPQVTGFFEVFVAGKLVHSKKGGDGYVDTESKFLKLVAAIKAALAQA.

Residues 10–13 (CGAU) constitute a cross-link (cysteinyl-selenocysteine (Cys-Sec); redox-active). Residue Sec-13 is a non-standard amino acid, selenocysteine. Residue Cys-37 is modified to S-glutathionyl cysteine.

It belongs to the SelWTH family. Selenoprotein W subfamily. Interacts with DPYSL2, PRDX1, YWHAB, YWHAG, HSP70 and HSP90. In terms of tissue distribution, detected in muscle, heart, tongue, brain, lung, spleen, kidney and liver. Highest levels expressed in muscle and heart whereas lowest levels detected in liver (at protein level).

Its subcellular location is the cytoplasm. Plays a role as a glutathione (GSH)-dependent antioxidant. May be involved in a redox-related process. May play a role in the myopathies of selenium deficiency. The polypeptide is Selenoprotein W (Ovis aries (Sheep)).